Consider the following 487-residue polypeptide: Steroid 21-hydroxylase (487 aa).

The heme b site is built by Arg92 and Lys117. Arg228 provides a ligand contact to 17alpha-hydroxyprogesterone. Residue Arg228 coordinates progesterone. Residues His357, Arg418, and Cys420 each coordinate heme b.

This sequence belongs to the cytochrome P450 family. It depends on heme b as a cofactor.

It localises to the endoplasmic reticulum membrane. It is found in the microsome membrane. It carries out the reaction progesterone + reduced [NADPH--hemoprotein reductase] + O2 = 21-hydroxyprogesterone + oxidized [NADPH--hemoprotein reductase] + H2O + H(+). The catalysed reaction is 17alpha-hydroxyprogesterone + reduced [NADPH--hemoprotein reductase] + O2 = 11-deoxycortisol + oxidized [NADPH--hemoprotein reductase] + H2O + H(+). A cytochrome P450 monooxygenase that plays a major role in adrenal steroidogenesis. Catalyzes the hydroxylation at C-21 of progesterone and 17alpha-hydroxyprogesterone to respectively form 11-deoxycorticosterone and 11-deoxycortisol, intermediate metabolites in the biosynthetic pathway of mineralocorticoids and glucocorticoids. Mechanistically, uses molecular oxygen inserting one oxygen atom into a substrate, and reducing the second into a water molecule, with two electrons provided by NADPH via cytochrome P450 reductase (CPR; NADPH-ferrihemoprotein reductase). This Mus musculus (Mouse) protein is Steroid 21-hydroxylase (Cyp21).